The primary structure comprises 107 residues: EMBRYO SURROUNDING FACTOR 1-like protein 5 (107 aa).

The first 22 residues, 1–22, serve as a signal peptide directing secretion; that stretch reads MSLLRFAILCIIFVSLFGVHEC. 4 disulfides stabilise this stretch: Cys-35/Cys-49, Cys-40/Cys-69, Cys-47/Cys-65, and Cys-50/Cys-58. Residues 87-107 form a helical membrane-spanning segment; sequence GLGPPIYLFFLGQFIYFVLGL.

It belongs to the MEG family. Expressed in flowers.

It is found in the membrane. This Arabidopsis thaliana (Mouse-ear cress) protein is EMBRYO SURROUNDING FACTOR 1-like protein 5 (ESFL5).